Reading from the N-terminus, the 243-residue chain is MNRPPLPLAAHERLIFALDVPGHDEAIAWVDRLGESVAFYKIGMELLASGEYFHVLDALAKRNKRVFVDLKFFDIPATVAGTIRRLSQWPVSYCTVHGWHAGMLEAAAAANQGDMRLLAVTVLTSMGRPDLAAMGIDREPVDVVVERALAAQAAGIDGVIASGQEAGPIRRATGPAFSIVCPGIRPGGPVGDDQQRTVGVAQALADGADAIVVGRPIRLANDPAAAAAAIQAEIRAAVVPHRD.

Residues Asp-19, Lys-41, Asp-69–Thr-78, Thr-124, Arg-185, Gln-194, Gly-214, and Arg-215 each bind substrate. The Proton donor role is filled by Lys-71.

Belongs to the OMP decarboxylase family. Type 1 subfamily. As to quaternary structure, homodimer.

The enzyme catalyses orotidine 5'-phosphate + H(+) = UMP + CO2. The protein operates within pyrimidine metabolism; UMP biosynthesis via de novo pathway; UMP from orotate: step 2/2. In terms of biological role, catalyzes the decarboxylation of orotidine 5'-monophosphate (OMP) to uridine 5'-monophosphate (UMP). In Xanthomonas campestris pv. campestris (strain B100), this protein is Orotidine 5'-phosphate decarboxylase.